Consider the following 723-residue polypeptide: MSSRPLLTLALSLHDRLDELSNRGQIHLVGYDLDVAAVAAVARHECLPIVNDGEVIARLSESTEILQRSYKGSTTIYGVHTGFGGSADTRPDDSSGLSKGLMQLLQTGVLVVENLDIPGLDTPQDVIPESMPSSWTRATTVVRINQCIRGHSAIRHQTVKSLLKLVAAQITPIVPLRGSISASGDLMPLSYIAGTLEGSPDIYVTKGGGKSAKIISAHDALGEIGMEPLRLGPREGLGLVNGTATSAATASLAVLDAIQLTLLSTGLTCLVSEGMAARVEWLHPFIAETRPHPGQREVAEIMRAFLKGSRLVSGLEGEASTHQHTLNVRPDEGLPQDRYPLRTSPQWLGPQFEDILLAHSQISVELNSTSDNPLTNLKTGAIHHGGNFQATSITSAVEKIRTSLQMVGKLLFSQCTEMINHQMNAGLPPNLAADDPSASFCCKGLDINIAAYQSELSYLSNSISNHVQSAEMHNQAVNSLAFLSTRYTIKAIELLGMMVAGVLYAACQAMDLRVMHATFLETVTATLQKAIADLLPNGFEAEDVERSLASAIRGLRNAWWNNAGSDASERCSLAAVAFVQVLCDPSKHHTDTPKVKVCLDLTAKEMRELQDDVRSHLSQAYHKHHSAFLEKPTTEEYIGEGSKALYLWARQDLGIPMNRGLVDHPSPGSIGKRTIGSYVSMIYQGIQDGRLFQRFATVGREVGLGNGGTNGIRKRAYAEYEIS.

Tyr77 acts as the Proton donor/acceptor in catalysis. A cross-link (5-imidazolinone (Ala-Gly)) is located at residues 182 to 184 (ASG). At Ser183 the chain carries 2,3-didehydroalanine (Ser). (E)-cinnamate-binding residues include Asn241, Gln336, Arg342, Asn372, Lys443, Glu471, and Asn474.

Belongs to the PAL/histidase family. Post-translationally, contains an active site 4-methylidene-imidazol-5-one (MIO), which is formed autocatalytically by cyclization and dehydration of residues Ala-Ser-Gly.

The protein resides in the cytoplasm. The catalysed reaction is L-phenylalanine = (E)-cinnamate + NH4(+). The protein operates within secondary metabolite biosynthesis. It functions in the pathway phenylpropanoid metabolism; trans-cinnamate biosynthesis; trans-cinnamate from L-phenylalanine: step 1/1. In terms of biological role, phenylalanine ammonia-lyase; part of the gene cluster that mediates the biosynthesis of squalestatin S1 (SQS1, also known as zaragozic acid A), a heavily oxidized fungal polyketide that offers potent cholesterol lowering activity by targeting squalene synthase (SS). SQS1 is composed of a 2,8-dioxobicyclic[3.2.1]octane-3,4,5-tricarboxyclic acid core that is connected to two lipophilic polyketide arms. These initial steps feature the priming of an unusual benzoic acid starter unit onto the highly reducing polyketide synthase clz14, followed by oxaloacetate extension and product release to generate a tricarboxylic acid containing product. The phenylalanine ammonia lyase (PAL) clz10 and the acyl-CoA ligase clz12 are involved in transforming phenylalanine into benzoyl-CoA. The citrate synthase-like protein clz17 is involved in connecting the C-alpha-carbons of the hexaketide chain and oxaloacetate to afford the tricarboxylic acid unit. The potential hydrolytic enzymes, clz11 and clz13, are in close proximity to pks2 and may participate in product release. On the other side, the tetraketide arm is synthesized by a the squalestatin tetraketide synthase clz2 and enzymatically esterified to the core in the last biosynthetic step, by the acetyltransferase clz6. The biosynthesis of the tetraketide must involve 3 rounds of chain extension. After the first and second rounds methyl-transfer occurs, and in all rounds of extension the ketoreductase and dehydratase are active. The enoyl reductase and C-MeT of clz2 are not active in the final round of extension. The acetyltransferase clz6 appears to have a broad substrate selectivity for its acyl CoA substrate, allowing the in vitro synthesis of novel squalestatins. The biosynthesis of SQS1 requires several oxidative steps likely performed by oxidoreductases clz3, clz15 and clz16. Finally, in support of the identification of the cluster as being responsible for SQS1 production, the cluster contains a gene encoding a putative squalene synthase (SS) clz20, suggesting a likely mechanism for self-resistance. The chain is Phenylalanine ammonia-lyase from Cochliobolus lunatus (Filamentous fungus).